The chain runs to 251 residues: Pyridoxine 5'-phosphate synthase (251 aa).

Asn8 and Arg19 together coordinate 3-amino-2-oxopropyl phosphate. Residue His44 is the Proton acceptor of the active site. Arg46 and His51 together coordinate 1-deoxy-D-xylulose 5-phosphate. The Proton acceptor role is filled by Glu76. Thr106 serves as a coordination point for 1-deoxy-D-xylulose 5-phosphate. Residue His200 is the Proton donor of the active site. Residues Asp201 and 223–224 (GH) contribute to the 3-amino-2-oxopropyl phosphate site.

This sequence belongs to the PNP synthase family. Homooctamer; tetramer of dimers.

It localises to the cytoplasm. It carries out the reaction 3-amino-2-oxopropyl phosphate + 1-deoxy-D-xylulose 5-phosphate = pyridoxine 5'-phosphate + phosphate + 2 H2O + H(+). It participates in cofactor biosynthesis; pyridoxine 5'-phosphate biosynthesis; pyridoxine 5'-phosphate from D-erythrose 4-phosphate: step 5/5. In terms of biological role, catalyzes the complicated ring closure reaction between the two acyclic compounds 1-deoxy-D-xylulose-5-phosphate (DXP) and 3-amino-2-oxopropyl phosphate (1-amino-acetone-3-phosphate or AAP) to form pyridoxine 5'-phosphate (PNP) and inorganic phosphate. The polypeptide is Pyridoxine 5'-phosphate synthase (Agrobacterium fabrum (strain C58 / ATCC 33970) (Agrobacterium tumefaciens (strain C58))).